The primary structure comprises 204 residues: uncharacterized protein (204 aa).

The first 17 residues, 1–17, serve as a signal peptide directing secretion; the sequence is MKRLVTGLLALSLFLAA. A disordered region spans residues 17 to 102; the sequence is ACGQDSDQQK…NQSSNNQKSS (86 aa). The N-palmitoyl cysteine moiety is linked to residue cysteine 18. Cysteine 18 carries the S-diacylglycerol cysteine lipid modification. Basic and acidic residues predominate over residues 23-70; the sequence is DQQKDSNKEKDDKAKTEQQDKKTNDSSKDKKDNKDDSKDVNKDNKDNS. The segment covering 71-102 has biased composition (low complexity); sequence ANDNQQQSNSNATNNDQNQTNNNQSSNNQKSS.

It localises to the cell membrane. This is an uncharacterized protein from Staphylococcus aureus (strain Mu50 / ATCC 700699).